A 173-amino-acid chain; its full sequence is CKLF-like MARVEL transmembrane domain-containing protein 8 (173 aa).

One can recognise an MARVEL domain in the interval 36–168; sequence FLRTPPGLLI…NTYFSFIAWR (133 aa). The next 4 helical transmembrane spans lie at 41–61, 70–90, 105–125, and 147–167; these read PGLL…LIAG, FGWV…FLIV, TTVG…AAIV, and FFAF…FIAW.

It belongs to the chemokine-like factor family.

It is found in the membrane. In Mus musculus (Mouse), this protein is CKLF-like MARVEL transmembrane domain-containing protein 8 (Cmtm8).